The chain runs to 257 residues: Type III pantothenate kinase (257 aa).

ATP is bound at residue 5–12; it reads DIGNTNIK. 107-110 serves as a coordination point for substrate; sequence GSDR. The active-site Proton acceptor is Asp109. An ATP-binding site is contributed by Thr133.

The protein belongs to the type III pantothenate kinase family. In terms of assembly, homodimer. Requires NH4(+) as cofactor. The cofactor is K(+).

The protein resides in the cytoplasm. The enzyme catalyses (R)-pantothenate + ATP = (R)-4'-phosphopantothenate + ADP + H(+). Its pathway is cofactor biosynthesis; coenzyme A biosynthesis; CoA from (R)-pantothenate: step 1/5. In terms of biological role, catalyzes the phosphorylation of pantothenate (Pan), the first step in CoA biosynthesis. This is Type III pantothenate kinase from Ehrlichia ruminantium (strain Welgevonden).